The following is a 299-amino-acid chain: Bifunctional methyltransferase-like/endonuclease (299 aa).

Residues 1–80 (MLSSKLLDIN…NLIVSPMQKA (80 aa)) form a probable methylated-DNA--protein-cysteine methyltransferase-like region. Positions 81 to 299 (LLEKEVKIIG…GRGDSNPGRD (219 aa)) are endonuclease V. Positions 135 and 197 each coordinate Mg(2+).

The protein in the N-terminal section; belongs to the MGMT family. In the C-terminal section; belongs to the endonuclease V family. It depends on Mg(2+) as a cofactor.

The protein localises to the cytoplasm. The enzyme catalyses Endonucleolytic cleavage at apurinic or apyrimidinic sites to products with a 5'-phosphate.. In terms of biological role, DNA repair enzyme involved in the repair of deaminated bases. Selectively cleaves double-stranded DNA at the second phosphodiester bond 3' to a deoxyinosine leaving behind the intact lesion on the nicked DNA. This Nanoarchaeum equitans (strain Kin4-M) protein is Bifunctional methyltransferase-like/endonuclease.